The chain runs to 278 residues: Protein D7 (278 aa).

2 consecutive CHHC U11-48K-type zinc fingers follow at residues 6-33 (LMQC…RENN) and 40-67 (LATC…EYRV). Zn(2+)-binding residues include Cys-9, His-15, His-25, Cys-29, Cys-43, His-49, His-59, and Cys-63. Positions 149-164 (QVKQNQPEPEPFTSSE) are enriched in polar residues. Disordered regions lie at residues 149–230 (QVKQ…PKAN) and 249–278 (PGGS…WVRK). Over residues 165–175 (RNYDPRSKEPP) the composition is skewed to basic and acidic residues. Residues 188–200 (ATTNTNPWCRQTG) are compositionally biased toward polar residues. Residues 214–225 (SSDEGPRNKEFP) show a composition bias toward basic and acidic residues.

The protein belongs to the UPF0224 (FAM112) family.

The protein resides in the cytoplasm. Its function is as follows. Involved in oocyte maturation. It is possible that D7 is required at a certain point in the maturation process and that maturation cannot proceed beyond this point unless a threshold amount of D7 protein is provided. The protein is Protein D7 (d7) of Xenopus laevis (African clawed frog).